The primary structure comprises 207 residues: Large ribosomal subunit protein uL4 (207 aa).

The protein belongs to the universal ribosomal protein uL4 family. Part of the 50S ribosomal subunit.

One of the primary rRNA binding proteins, this protein initially binds near the 5'-end of the 23S rRNA. It is important during the early stages of 50S assembly. It makes multiple contacts with different domains of the 23S rRNA in the assembled 50S subunit and ribosome. Functionally, forms part of the polypeptide exit tunnel. This chain is Large ribosomal subunit protein uL4, found in Rickettsia africae (strain ESF-5).